A 475-amino-acid polypeptide reads, in one-letter code: 3-isopropylmalate dehydratase large subunit (475 aa).

The [4Fe-4S] cluster site is built by C353, C414, and C417.

It belongs to the aconitase/IPM isomerase family. LeuC type 1 subfamily. Heterodimer of LeuC and LeuD. Requires [4Fe-4S] cluster as cofactor.

The enzyme catalyses (2R,3S)-3-isopropylmalate = (2S)-2-isopropylmalate. Its pathway is amino-acid biosynthesis; L-leucine biosynthesis; L-leucine from 3-methyl-2-oxobutanoate: step 2/4. Catalyzes the isomerization between 2-isopropylmalate and 3-isopropylmalate, via the formation of 2-isopropylmaleate. In Ectopseudomonas mendocina (strain ymp) (Pseudomonas mendocina), this protein is 3-isopropylmalate dehydratase large subunit.